Here is a 176-residue protein sequence, read N- to C-terminus: Nucleoside triphosphate/diphosphate phosphatase (176 aa).

The active-site Proton donor is the Arg-23. 6 residues coordinate Mg(2+): Asn-87, Asp-103, Asp-105, Asp-107, Asp-120, and Glu-123.

The protein belongs to the Ntdp family. Requires Mg(2+) as cofactor.

The enzyme catalyses a ribonucleoside 5'-triphosphate + H2O = a ribonucleoside 5'-diphosphate + phosphate + H(+). It catalyses the reaction a ribonucleoside 5'-diphosphate + H2O = a ribonucleoside 5'-phosphate + phosphate + H(+). In terms of biological role, has nucleoside phosphatase activity towards nucleoside triphosphates and nucleoside diphosphates. This Bacillus cereus (strain G9842) protein is Nucleoside triphosphate/diphosphate phosphatase.